An 83-amino-acid chain; its full sequence is Urotensin-2 (83 aa).

A propeptide spanning residues 49 to 71 (EVLLEKQSLLNPFSRVFGIRKQF) is cleaved from the precursor. A disulfide bond links cysteine 77 and cysteine 82.

This sequence belongs to the urotensin-2 family.

It localises to the secreted. In terms of biological role, urotensin is found in the teleost caudal neurosecretory system. It has a suggested role in osmoregulation and as a corticotropin-releasing factor. The non-hormonal portion of this precursor may be a urotensin binding protein, urophysin. This chain is Urotensin-2, found in Platichthys flesus (European flounder).